A 283-amino-acid chain; its full sequence is S-methyl-5'-thioadenosine phosphorylase (283 aa).

T18 is a phosphate binding site. N6-acetyllysine is present on K51. Phosphate contacts are provided by residues 60–61 and 93–94; these read RH and TA. M196 lines the substrate pocket. T197 contacts phosphate. Residue 220 to 222 coordinates substrate; that stretch reads DYD.

It belongs to the PNP/MTAP phosphorylase family. MTAP subfamily. Homotrimer.

Its subcellular location is the cytoplasm. It is found in the nucleus. The enzyme catalyses S-methyl-5'-thioadenosine + phosphate = 5-(methylsulfanyl)-alpha-D-ribose 1-phosphate + adenine. It functions in the pathway amino-acid biosynthesis; L-methionine biosynthesis via salvage pathway; S-methyl-5-thio-alpha-D-ribose 1-phosphate from S-methyl-5'-thioadenosine (phosphorylase route): step 1/1. Catalyzes the reversible phosphorylation of S-methyl-5'-thioadenosine (MTA) to adenine and 5-methylthioribose-1-phosphate. Involved in the breakdown of MTA, a major by-product of polyamine biosynthesis. Responsible for the first step in the methionine salvage pathway after MTA has been generated from S-adenosylmethionine. Has broad substrate specificity with 6-aminopurine nucleosides as preferred substrates. The protein is S-methyl-5'-thioadenosine phosphorylase (Mtap) of Mus musculus (Mouse).